The chain runs to 98 residues: Protein FAM24A (98 aa).

An N-terminal signal peptide occupies residues 1–29 (MFDLRTKVMIGIASTLLIAAIVLITVVFC).

It belongs to the FAM24 family.

The protein resides in the secreted. The protein is Protein FAM24A (Fam24a) of Rattus norvegicus (Rat).